A 396-amino-acid chain; its full sequence is NAD(P)H oxidoreductase RTN4IP1, mitochondrial (396 aa).

A mitochondrion-targeting transit peptide spans Met-1–Ser-40. Positions Gly-52–Val-393 constitute an Enoyl reductase (ER) domain. NADPH is bound by residues Ser-214, Gly-216, Val-217, Ser-237, Tyr-255, Asn-276, Leu-300, Ala-341, Phe-343, His-386, Ala-387, and Arg-388.

Belongs to the zinc-containing alcohol dehydrogenase family. Quinone oxidoreductase subfamily. Interacts with RTN4, UQCRC1 and UQCRC2. As to expression, widely expressed in mitochondria-enriched tissues. Found in heart, kidney, liver, brain and spinal cord.

It is found in the mitochondrion matrix. The protein resides in the mitochondrion outer membrane. It catalyses the reaction a 3-demethylubiquinone + NADH + 2 H(+) = a 3-demethylubiquinol + NAD(+). The enzyme catalyses a 3-demethylubiquinone + NADPH + 2 H(+) = a 3-demethylubiquinol + NADP(+). The catalysed reaction is 3-demethylubiquinone-10 + NADH + 2 H(+) = 3-demethylubiquinol-10 + NAD(+). It carries out the reaction 3-demethylubiquinone-10 + NADPH + 2 H(+) = 3-demethylubiquinol-10 + NADP(+). Its pathway is cofactor biosynthesis; ubiquinone biosynthesis. In terms of biological role, NAD(P)H oxidoreductase involved in the ubiquinone biosynthetic pathway. Required for the O-methyltransferase activity of COQ3. Able to catalyze the oxidoreduction of 3-demethylubiquinone into 3-demethylubiquinol in vitro. However, it is unclear if 3-demethylubiquinone constitutes a substrate in vivo. May also play a role in the regulation of retinal ganglion cell (RGC) neurite outgrowth, and hence in the development of the inner retina and optic nerve. Appears to be a potent inhibitor of regeneration following spinal cord injury. The protein is NAD(P)H oxidoreductase RTN4IP1, mitochondrial of Mus musculus (Mouse).